We begin with the raw amino-acid sequence, 657 residues long: uncharacterized protein (657 aa).

Phosphoserine is present on Ser114. Disordered regions lie at residues 142–216 (LASQ…SDEE), 228–248 (SSREKNTNQGFSSANVSEEEE), 291–312 (STRSRADYPQSHVSSDTASHTP), 335–354 (SSPGRSEAETVDEPVSEGAD), and 399–522 (AEAS…SGRH). Positions 143–169 (ASQNTDKTSQNQARELPVTENNAQNAK) are enriched in polar residues. Residues 190–206 (AGKERTLQTPKQKEPAR) are compositionally biased toward basic and acidic residues. Ser213 carries the post-translational modification Phosphoserine. Composition is skewed to polar residues over residues 234–243 (TNQGFSSANV) and 301–312 (SHVSSDTASHTP). Residues 343–354 (ETVDEPVSEGAD) show a composition bias toward acidic residues. The span at 437-451 (SASSASAIQQDSTSS) shows a compositional bias: low complexity. Positions 462–484 (NTVSSAYSEDFENSPSLTASEPT) are enriched in polar residues. Basic and acidic residues predominate over residues 485-495 (AHSKESLDRTL). A compositionally biased stretch (polar residues) spans 499–513 (SESSSSVKTDLPQTA).

This is an uncharacterized protein from Homo sapiens (Human).